The sequence spans 337 residues: Putative [LysW]-lysine/[LysW]-ornithine hydrolase (337 aa).

Residue histidine 67 coordinates Zn(2+). The active site involves aspartate 69. Aspartate 91 lines the Zn(2+) pocket. Glutamate 118 serves as the catalytic Proton acceptor. Residues glutamate 119, glutamate 140, and histidine 298 each contribute to the Zn(2+) site.

The protein belongs to the peptidase M20A family. LysK subfamily. Requires Zn(2+) as cofactor. The cofactor is Co(2+).

The protein resides in the cytoplasm. The enzyme catalyses [amino-group carrier protein]-C-terminal-gamma-(L-lysyl)-L-glutamate + H2O = [amino-group carrier protein]-C-terminal-L-glutamate + L-lysine. It catalyses the reaction [amino-group carrier protein]-C-terminal-gamma-(L-ornithyl)-L-glutamate + H2O = [amino-group carrier protein]-C-terminal-L-glutamate + L-ornithine. It participates in amino-acid biosynthesis; L-lysine biosynthesis via AAA pathway; L-lysine from L-alpha-aminoadipate (Thermus route): step 5/5. The protein operates within amino-acid biosynthesis; L-arginine biosynthesis. In terms of biological role, catalyzes the release of L-lysine from [LysW]-gamma-L-lysine and the release of L-ornithine from [LysW]-L-ornithine. The polypeptide is Putative [LysW]-lysine/[LysW]-ornithine hydrolase (Pyrococcus abyssi (strain GE5 / Orsay)).